The following is a 162-amino-acid chain: Cytochrome c-type biogenesis protein CcmE (162 aa).

The Cytoplasmic segment spans residues 1 to 8 (MNPRRKKR). Residues 9-29 (LALVVGLIGGVAAVASLLLYA) traverse the membrane as a helical; Signal-anchor for type II membrane protein segment. The Periplasmic portion of the chain corresponds to 30–162 (LNTNLNLFYT…YTETQKGGSR (133 aa)). Residues His-131 and Tyr-135 each contribute to the heme site.

Belongs to the CcmE/CycJ family.

It is found in the cell inner membrane. Heme chaperone required for the biogenesis of c-type cytochromes. Transiently binds heme delivered by CcmC and transfers the heme to apo-cytochromes in a process facilitated by CcmF and CcmH. This Shewanella amazonensis (strain ATCC BAA-1098 / SB2B) protein is Cytochrome c-type biogenesis protein CcmE.